The primary structure comprises 436 residues: Proline--tRNA ligase (436 aa).

The protein belongs to the class-II aminoacyl-tRNA synthetase family. ProS type 2 subfamily. As to quaternary structure, homodimer.

The protein resides in the cytoplasm. It catalyses the reaction tRNA(Pro) + L-proline + ATP = L-prolyl-tRNA(Pro) + AMP + diphosphate. Functionally, catalyzes the attachment of proline to tRNA(Pro) in a two-step reaction: proline is first activated by ATP to form Pro-AMP and then transferred to the acceptor end of tRNA(Pro). This Neorickettsia sennetsu (strain ATCC VR-367 / Miyayama) (Ehrlichia sennetsu) protein is Proline--tRNA ligase.